The sequence spans 162 residues: ATP synthase subunit b 1 (162 aa).

Residues M1 to W21 form a helical membrane-spanning segment.

Belongs to the ATPase B chain family. In terms of assembly, F-type ATPases have 2 components, F(1) - the catalytic core - and F(0) - the membrane proton channel. F(1) has five subunits: alpha(3), beta(3), gamma(1), delta(1), epsilon(1). F(0) has three main subunits: a(1), b(2) and c(10-14). The alpha and beta chains form an alternating ring which encloses part of the gamma chain. F(1) is attached to F(0) by a central stalk formed by the gamma and epsilon chains, while a peripheral stalk is formed by the delta and b chains.

The protein localises to the cell inner membrane. Its function is as follows. F(1)F(0) ATP synthase produces ATP from ADP in the presence of a proton or sodium gradient. F-type ATPases consist of two structural domains, F(1) containing the extramembraneous catalytic core and F(0) containing the membrane proton channel, linked together by a central stalk and a peripheral stalk. During catalysis, ATP synthesis in the catalytic domain of F(1) is coupled via a rotary mechanism of the central stalk subunits to proton translocation. In terms of biological role, component of the F(0) channel, it forms part of the peripheral stalk, linking F(1) to F(0). This is ATP synthase subunit b 1 from Methylorubrum populi (strain ATCC BAA-705 / NCIMB 13946 / BJ001) (Methylobacterium populi).